Consider the following 174-residue polypeptide: MALLDLTVQMACSDRLPDLPWQDWLDRWLTDIQPQLPEDWQAPTYEACLRFVDDAEIQQLNRDYRQLDKPTDVLAFAALEDELALGFDPEEPLYLGDVIISVPTAQRQAQGHALETELVWLSAHGLLHLLGWDHPNEEQLAAMLTQQERWLQLVAVPVPPRWLDEVSQPPSSEP.

Residues histidine 124, histidine 128, and histidine 134 each coordinate Zn(2+).

It belongs to the endoribonuclease YbeY family. Zn(2+) is required as a cofactor.

Its subcellular location is the cytoplasm. Functionally, single strand-specific metallo-endoribonuclease involved in late-stage 70S ribosome quality control and in maturation of the 3' terminus of the 16S rRNA. In Synechococcus elongatus (strain ATCC 33912 / PCC 7942 / FACHB-805) (Anacystis nidulans R2), this protein is Endoribonuclease YbeY.